Reading from the N-terminus, the 252-residue chain is H-2 class II histocompatibility antigen, A-F beta chain (252 aa).

The N-terminal stretch at 1–16 (AAVVVLMVLSSPGTEG) is a signal peptide. Residues 17 to 109 (GNSERHFVSQ…VETPTSLRRL (93 aa)) form a beta-1 region. The Extracellular portion of the chain corresponds to 17–213 (GNSERHFVSQ…RAQSESARSK (197 aa)). Disulfide bonds link Cys-31-Cys-93 and Cys-132-Cys-188. Asn-35 carries N-linked (GlcNAc...) asparagine glycosylation. The tract at residues 110–203 (EQPNVVISLS…SLKSPITVEW (94 aa)) is beta-2. Positions 112-200 (PNVVISLSRT…EHPSLKSPIT (89 aa)) constitute an Ig-like C1-type domain. Residues 204–213 (RAQSESARSK) form a connecting peptide region. Residues 214-234 (MLSGIGGCVLGVIFLGLGLFI) traverse the membrane as a helical segment. The Cytoplasmic portion of the chain corresponds to 235 to 252 (RYRSQKGPRGPPPAGLLQ).

This sequence belongs to the MHC class II family. In terms of processing, ubiquitinated in immature dendritic cells leading to down-regulation of MHC class II.

The protein localises to the membrane. This chain is H-2 class II histocompatibility antigen, A-F beta chain (H2-Ab1), found in Mus musculus (Mouse).